The chain runs to 236 residues: Baculoviral IAP repeat-containing protein 8 (236 aa).

One copy of the BIR repeat lies at 7 to 70; it reads RLITFGTWMY…KWYPGCKYLL (64 aa). Residues C39, C42, H59, and C66 each contribute to the Zn(2+) site. Residues 189-224 form an RING-type zinc finger; sequence CKICMDRHIAVVFIPCGHLVTCKQCAEAVDRCPMCS.

This sequence belongs to the IAP family. In terms of assembly, binds to caspase-9.

It is found in the cytoplasm. Protects against apoptosis mediated by BAX. The sequence is that of Baculoviral IAP repeat-containing protein 8 (BIRC8) from Pan troglodytes (Chimpanzee).